We begin with the raw amino-acid sequence, 302 residues long: Arginase (302 aa).

Mn(2+) is bound by residues histidine 103, aspartate 126, histidine 128, and aspartate 130. Substrate contacts are provided by residues histidine 128 to asparagine 132, serine 139 to asparagine 141, and aspartate 180. 2 residues coordinate Mn(2+): aspartate 229 and aspartate 231. 2 residues coordinate substrate: threonine 243 and glutamate 274.

It belongs to the arginase family. Mn(2+) is required as a cofactor.

It catalyses the reaction L-arginine + H2O = urea + L-ornithine. It participates in nitrogen metabolism; urea cycle; L-ornithine and urea from L-arginine: step 1/1. This chain is Arginase (arg), found in Staphylococcus aureus (strain MSSA476).